A 527-amino-acid polypeptide reads, in one-letter code: Rhesus-like glycoprotein A (527 aa).

Residues methionine 1–proline 18 lie on the Cytoplasmic side of the membrane. A helical transmembrane segment spans residues isoleucine 19–leucine 39. Topologically, residues threonine 40–tyrosine 70 are extracellular. Asparagine 47 carries an N-linked (GlcNAc...) asparagine glycan. Residues glycine 71–leucine 91 traverse the membrane as a helical segment. Over arginine 92–leucine 99 the chain is Cytoplasmic. The chain crosses the membrane as a helical span at residues glycine 100–phenylalanine 120. The Extracellular portion of the chain corresponds to glutamate 121–aspartate 141. A helical transmembrane segment spans residues serine 142–glycine 162. At arginine 163–proline 166 the chain is on the cytoplasmic side. Residues leucine 167–glycine 187 form a helical membrane-spanning segment. Residues glutamate 188–aspartate 195 lie on the Extracellular side of the membrane. Residues valine 196–phenylalanine 216 traverse the membrane as a helical segment. Residues leucine 217 to asparagine 236 are Cytoplasmic-facing. Residues phenylalanine 237–alanine 257 traverse the membrane as a helical segment. The Extracellular segment spans residues proline 258–glutamine 263. Residues phenylalanine 264 to valine 284 traverse the membrane as a helical segment. The Cytoplasmic portion of the chain corresponds to serine 285–histidine 299. Residues valine 300–isoleucine 319 form a helical membrane-spanning segment. Topologically, residues asparagine 320–proline 321 are extracellular. Residues glycine 322–isoleucine 342 traverse the membrane as a helical segment. Residues threonine 343–glycine 357 are Cytoplasmic-facing. The chain crosses the membrane as a helical span at residues isoleucine 358–isoleucine 378. Residues lysine 379–asparagine 406 are Extracellular-facing. Residues leucine 407–isoleucine 427 traverse the membrane as a helical segment. Residues leucine 428–isoleucine 527 are Cytoplasmic-facing. Positions serine 471–isoleucine 527 are disordered. Residues glycine 483–lysine 495 show a composition bias toward basic and acidic residues. Residues serine 514–isoleucine 527 are compositionally biased toward acidic residues.

The protein belongs to the ammonium transporter (TC 2.A.49) family. Rh subfamily. Interacts with ap1g1.

The protein localises to the contractile vacuole. It is found in the membrane. May be a carbon dioxide/bicarbonate transporter. The sequence is that of Rhesus-like glycoprotein A (rhgA) from Dictyostelium discoideum (Social amoeba).